The chain runs to 270 residues: Shikimate dehydrogenase (NADP(+)) (270 aa).

Shikimate is bound by residues 14-16 (SKS) and threonine 60. Residue lysine 64 is the Proton acceptor of the active site. Glutamate 76 serves as a coordination point for NADP(+). Shikimate contacts are provided by asparagine 85 and aspartate 101. NADP(+) is bound by residues 125 to 129 (GAGGA), 149 to 154 (NRTASR), and methionine 213. Residue tyrosine 215 coordinates shikimate. Glycine 236 serves as a coordination point for NADP(+).

The protein belongs to the shikimate dehydrogenase family. As to quaternary structure, homodimer.

It catalyses the reaction shikimate + NADP(+) = 3-dehydroshikimate + NADPH + H(+). Its pathway is metabolic intermediate biosynthesis; chorismate biosynthesis; chorismate from D-erythrose 4-phosphate and phosphoenolpyruvate: step 4/7. In terms of biological role, involved in the biosynthesis of the chorismate, which leads to the biosynthesis of aromatic amino acids. Catalyzes the reversible NADPH linked reduction of 3-dehydroshikimate (DHSA) to yield shikimate (SA). The polypeptide is Shikimate dehydrogenase (NADP(+)) (Stutzerimonas stutzeri (strain A1501) (Pseudomonas stutzeri)).